Here is a 298-residue protein sequence, read N- to C-terminus: Biphenyl-2,3-diol 1,2-dioxygenase (298 aa).

2 VOC domains span residues 5-119 (SLGY…IYYG) and 143-264 (GLGH…YGWS). Positions 146, 210, and 260 each coordinate Fe cation.

It belongs to the extradiol ring-cleavage dioxygenase family. As to quaternary structure, homooctamer. The enzyme is composed of two planar tetramers rotated at 45 degrees relative to each other, with a channel in the middle. The cofactor is Fe(2+).

It catalyses the reaction biphenyl-2,3-diol + O2 = 2-hydroxy-6-oxo-6-phenylhexa-2,4-dienoate + H(+). It functions in the pathway xenobiotic degradation; biphenyl degradation; 2-hydroxy-2,4-pentadienoate and benzoate from biphenyl: step 3/4. Shows a preference for catechols with groups immediately adjacent to the hydroxyl substituents. This Paraburkholderia xenovorans (strain LB400) protein is Biphenyl-2,3-diol 1,2-dioxygenase (bphC).